A 429-amino-acid chain; its full sequence is ATP-dependent Clp protease ATP-binding subunit ClpX (429 aa).

In terms of domain architecture, ClpX-type ZB spans 1 to 54; the sequence is MARSKSQKIEGCSFCGRTRAEAEGKIISAKSVAICFECSKICHNLFKEESDKPA. Zn(2+) contacts are provided by Cys-12, Cys-15, Cys-35, and Cys-38. ATP is bound at residue 119 to 126; that stretch reads PTGSGKTL.

The protein belongs to the ClpX chaperone family. Component of the ClpX-ClpP complex. Forms a hexameric ring that, in the presence of ATP, binds to fourteen ClpP subunits assembled into a disk-like structure with a central cavity, resembling the structure of eukaryotic proteasomes.

In terms of biological role, ATP-dependent specificity component of the Clp protease. It directs the protease to specific substrates. Can perform chaperone functions in the absence of ClpP. In Borrelia duttonii (strain Ly), this protein is ATP-dependent Clp protease ATP-binding subunit ClpX.